We begin with the raw amino-acid sequence, 309 residues long: Cilia-and flagella-associated protein 96 (309 aa).

Positions Glu220–Pro249 are disordered.

It belongs to the CFAP96 family. Detected in testis and fetal liver.

Its subcellular location is the cytoplasm. The protein resides in the cytoskeleton. It localises to the microtubule organizing center. It is found in the centrosome. The sequence is that of Cilia-and flagella-associated protein 96 from Homo sapiens (Human).